Consider the following 146-residue polypeptide: 3-hydroxyacyl-[acyl-carrier-protein] dehydratase FabZ (146 aa).

H49 is an active-site residue.

It belongs to the thioester dehydratase family. FabZ subfamily.

The protein resides in the cytoplasm. It carries out the reaction a (3R)-hydroxyacyl-[ACP] = a (2E)-enoyl-[ACP] + H2O. In terms of biological role, involved in unsaturated fatty acids biosynthesis. Catalyzes the dehydration of short chain beta-hydroxyacyl-ACPs and long chain saturated and unsaturated beta-hydroxyacyl-ACPs. The sequence is that of 3-hydroxyacyl-[acyl-carrier-protein] dehydratase FabZ from Pseudomonas entomophila (strain L48).